We begin with the raw amino-acid sequence, 88 residues long: Putative septation protein SpoVG (88 aa).

Belongs to the SpoVG family.

Could be involved in septation. The chain is Putative septation protein SpoVG from Desulforudis audaxviator (strain MP104C).